An 85-amino-acid chain; its full sequence is Beta-insect depressant toxin BjIT2 (85 aa).

The signal sequence occupies residues 1 to 21 (MKLLLLLVISASMLLECLVNA). The LCN-type CS-alpha/beta domain occupies 22-82 (DGYIRKKDGC…TWKSSTNTCG (61 aa)). Disulfide bonds link Cys-31–Cys-81, Cys-35–Cys-56, Cys-42–Cys-63, and Cys-46–Cys-65. Positions 83-85 (RKK) are cleaved as a propeptide — removed by a carboxypeptidase.

The protein belongs to the long (4 C-C) scorpion toxin superfamily. Sodium channel inhibitor family. Beta subfamily. Post-translationally, C-terminal basic residues are removed by a carboxypeptidase. Expressed by the venom gland.

Its subcellular location is the secreted. Functionally, depressant insect beta-toxins cause a transient contraction paralysis followed by a slow flaccid paralysis. They bind voltage-independently at site-4 of sodium channels (Nav) and shift the voltage of activation toward more negative potentials thereby affecting sodium channel activation and promoting spontaneous and repetitive firing. This toxin is active only on insects. In Hottentotta judaicus (Black scorpion), this protein is Beta-insect depressant toxin BjIT2.